Here is a 206-residue protein sequence, read N- to C-terminus: Large ribosomal subunit protein uL4 (206 aa).

A disordered region spans residues 49-79; sequence KVKTRSEISRTTKKMYKQKGTGNARHGAASA.

This sequence belongs to the universal ribosomal protein uL4 family. In terms of assembly, part of the 50S ribosomal subunit.

Functionally, one of the primary rRNA binding proteins, this protein initially binds near the 5'-end of the 23S rRNA. It is important during the early stages of 50S assembly. It makes multiple contacts with different domains of the 23S rRNA in the assembled 50S subunit and ribosome. In terms of biological role, forms part of the polypeptide exit tunnel. This is Large ribosomal subunit protein uL4 from Methylobacterium sp. (strain 4-46).